The chain runs to 90 residues: Phosphocarrier protein NPr (90 aa).

Positions T2 to D90 constitute an HPr domain. Catalysis depends on H16, which acts as the Pros-phosphohistidine intermediate.

Belongs to the HPr family.

It is found in the cytoplasm. Component of the phosphoenolpyruvate-dependent nitrogen-metabolic phosphotransferase system (nitrogen-metabolic PTS), that seems to be involved in regulating nitrogen metabolism. The phosphoryl group from phosphoenolpyruvate (PEP) is transferred to the phosphoryl carrier protein NPr by enzyme I-Ntr. Phospho-NPr then transfers it to EIIA-Ntr. Could function in the transcriptional regulation of sigma-54 dependent operons in conjunction with the NPr (PtsO) and EIIA-Ntr (PtsN) proteins. This chain is Phosphocarrier protein NPr (ptsO), found in Klebsiella oxytoca.